We begin with the raw amino-acid sequence, 429 residues long: ATP-sensitive inward rectifier potassium channel 12 (429 aa).

Over 1–76 (MTAGRVNPYS…IADMFTTCVD (76 aa)) the chain is Cytoplasmic. A helical membrane pass occupies residues 77 to 103 (IRWRYMLLLFSLAFLVSWLLFGLIFWL). Residues Arg78 and Arg80 each contribute to the a 1,2-diacyl-sn-glycero-3-phospho-(1D-myo-inositol-4,5-bisphosphate) site. Residues 104–129 (IALIHGDLENPGGDDTFKPCVLQVNG) are Extracellular-facing. An intrachain disulfide couples Cys123 to Cys155. The segment at residues 130-146 (FVAAFLFSIETQTTIGY) is an intramembrane region (helical; Pore-forming). Residues Thr143, Ile144, Gly145, and Tyr146 each coordinate K(+). The short motif at 143–148 (TIGYGF) is the Selectivity filter element. Residues 147 to 155 (GFRCVTEEC) lie on the Extracellular side of the membrane. Residues 156–183 (PLAVFMVVVQSIVGCIIDSFMIGAIMAK) traverse the membrane as a helical segment. Positions 183 and 188 each coordinate a 1,2-diacyl-sn-glycero-3-phospho-(1D-myo-inositol-4,5-bisphosphate). Residues 184 to 429 (MARPKKRAQT…QRSYRRESEI (246 aa)) are Cytoplasmic-facing. Positions 386–407 (RDEDEEDDDSRGLDDLSPDNRH) are disordered. Residues 395–407 (SRGLDDLSPDNRH) show a composition bias toward basic and acidic residues.

This sequence belongs to the inward rectifier-type potassium channel family. As to quaternary structure, homotetramer.

It is found in the membrane. The protein resides in the cell membrane. Its subcellular location is the sarcolemma. The protein localises to the T-tubule. It carries out the reaction K(+)(in) = K(+)(out). With respect to regulation, activated by phosphatidylinositol 4,5-bisphosphate (PtdIns(4,5)P2). PtdIns(4,5)P2 binding to the cytoplasmic side of the channel triggers a conformation change leading to channel opening. In terms of biological role, inward rectifying potassium channel that probably participates in controlling the resting membrane potential in electrically excitable cells. Probably participates in establishing action potential waveform and excitability of neuronal and muscle tissues. Inward rectifier potassium channels are characterized by a greater tendency to allow potassium to flow into the cell rather than out of it. Their voltage dependence is regulated by the concentration of extracellular potassium; as external potassium is raised, the voltage range of the channel opening shifts to more positive voltages. The inward rectification is mainly due to the blockage of outward current by internal magnesium. This is ATP-sensitive inward rectifier potassium channel 12 (KCNJ12) from Gallus gallus (Chicken).